Consider the following 510-residue polypeptide: Lysine--tRNA ligase (510 aa).

Mg(2+)-binding residues include Glu-420 and Glu-427.

This sequence belongs to the class-II aminoacyl-tRNA synthetase family. Homodimer. Mg(2+) serves as cofactor.

It is found in the cytoplasm. It carries out the reaction tRNA(Lys) + L-lysine + ATP = L-lysyl-tRNA(Lys) + AMP + diphosphate. This Vibrio campbellii (strain ATCC BAA-1116) protein is Lysine--tRNA ligase.